We begin with the raw amino-acid sequence, 755 residues long: Cellulose synthase-like protein B4 (755 aa).

Helical transmembrane passes span 24–44 (AVDLTILGLLLSLLLYRILHV) and 49–69 (TVWIVAFLCETCFTFVWLLIT). Catalysis depends on residues aspartate 136 and aspartate 461. The next 6 helical transmembrane spans lie at 533–556 (AYLYVFSWGLRSIPELFYCLLPAY), 569–589 (VYLGIIITLVGIHCLYTLWEF), 615–635 (LFSVLDVILKLLGISKTVFIV), 674–694 (FLPGTFIVLVNLAALAGCLVG), 702–722 (GSGLAEACGCILVVILFLPFL), and 733–753 (IPFSTLSKAAFLAALFVVLSV).

The protein belongs to the glycosyltransferase 2 family. Plant cellulose synthase-like B subfamily.

It is found in the golgi apparatus membrane. Functionally, thought to be a Golgi-localized beta-glycan synthase that polymerize the backbones of noncellulosic polysaccharides (hemicelluloses) of plant cell wall. In Arabidopsis thaliana (Mouse-ear cress), this protein is Cellulose synthase-like protein B4 (CSLB4).